A 682-amino-acid polypeptide reads, in one-letter code: Acyl-CoA synthetase short-chain family member 3, mitochondrial (682 aa).

The N-terminal 29 residues, 1 to 29 (MKPSWLQCRKVTGAGTLGAPLPGSPSVRG), are a transit peptide targeting the mitochondrion. 222–225 (EPGR) contributes to the CoA binding site. Residues 420–422 (GER) and 441–446 (DHWWQT) contribute to the ATP site. The residue at position 513 (Lys-513) is an N6-succinyllysine. Lys-519 is subject to N6-acetyllysine. The ATP site is built by Asp-534, Arg-549, and Arg-560. Arg-619 provides a ligand contact to CoA.

It belongs to the ATP-dependent AMP-binding enzyme family.

It localises to the mitochondrion matrix. The catalysed reaction is acetate + ATP + CoA = acetyl-CoA + AMP + diphosphate. The enzyme catalyses propanoate + ATP + CoA = propanoyl-CoA + AMP + diphosphate. It carries out the reaction butanoate + ATP + CoA = butanoyl-CoA + AMP + diphosphate. Functionally, catalyzes the synthesis of acetyl-CoA from short-chain fatty acids. Propionate is the preferred substrate but can also utilize acetate and butyrate with a much lower affinity. The sequence is that of Acyl-CoA synthetase short-chain family member 3, mitochondrial (Acss3) from Mus musculus (Mouse).